The chain runs to 658 residues: UvrABC system protein B (658 aa).

The region spanning 26-414 is the Helicase ATP-binding domain; sequence AGLKKGLKHQ…PDVIEQIIRP (389 aa). 39–46 lines the ATP pocket; the sequence is GATGTGKT. A Beta-hairpin motif is present at residues 92-115; it reads YYDYYQPEAYVPQSDTYIEKDASI. The Helicase C-terminal domain maps to 430 to 592; the sequence is QIDDLMDEIN…ITPKTIKKEI (163 aa). A UVR domain is found at 622 to 658; it reads DVFIEGMEHEMKEAAKALDFERAAELRDALLEIKAEG.

Belongs to the UvrB family. As to quaternary structure, forms a heterotetramer with UvrA during the search for lesions. Interacts with UvrC in an incision complex.

Its subcellular location is the cytoplasm. Functionally, the UvrABC repair system catalyzes the recognition and processing of DNA lesions. A damage recognition complex composed of 2 UvrA and 2 UvrB subunits scans DNA for abnormalities. Upon binding of the UvrA(2)B(2) complex to a putative damaged site, the DNA wraps around one UvrB monomer. DNA wrap is dependent on ATP binding by UvrB and probably causes local melting of the DNA helix, facilitating insertion of UvrB beta-hairpin between the DNA strands. Then UvrB probes one DNA strand for the presence of a lesion. If a lesion is found the UvrA subunits dissociate and the UvrB-DNA preincision complex is formed. This complex is subsequently bound by UvrC and the second UvrB is released. If no lesion is found, the DNA wraps around the other UvrB subunit that will check the other stand for damage. The polypeptide is UvrABC system protein B (Listeria monocytogenes serovar 1/2a (strain ATCC BAA-679 / EGD-e)).